The chain runs to 443 residues: MIKNDTIAAIATPPGEGSIAIVRISGPEAIQITDKIFSGSVPSFSSHTAHLGTVSYNGQQIDQTLLLIMRAPRSFTGEDVVELQCHGGYFSCSQILAALIAEGARPALPGEFSQRAFLNGKIDLIQAEAIQNIIAADNLDAFHIAQNHFQGHFSKKVQQISSLIIESLAFIEVLADFPEEEQPDMQEPMNRLHEAILIIDDLIASFDQGQRLAQGTSIVLAGHPNAGKSSLLNALTNKNRAIVTDIPGTTRDILEENWMLQGKRIRLIDSAGQRETHNPIEQEGIERAIAAMEASEAILWVMDASQPPPPLPEILMRKPSLLLWNKSDLATPPHLETTLPQLAVSAKTGAGMIELKQFIQQWMQKQQLGKNGKVFLISSRHHTILQHMRTYLLSAQEGLQSQSPPEFIALELRQALQTTGNLSGSEINETILGEIFSRFCIGK.

(6S)-5-formyl-5,6,7,8-tetrahydrofolate-binding residues include R23, E82, and K121. The 150-residue stretch at 215–364 folds into the TrmE-type G domain; sequence GTSIVLAGHP…LKQFIQQWMQ (150 aa). N225 lines the K(+) pocket. Residues 225–230, 244–250, and 269–272 contribute to the GTP site; these read NAGKSS, TDIPGTT, and DSAG. S229 contributes to the Mg(2+) binding site. T244, I246, and T249 together coordinate K(+). Residue T250 participates in Mg(2+) binding. Residue K443 participates in (6S)-5-formyl-5,6,7,8-tetrahydrofolate binding.

It belongs to the TRAFAC class TrmE-Era-EngA-EngB-Septin-like GTPase superfamily. TrmE GTPase family. As to quaternary structure, homodimer. Heterotetramer of two MnmE and two MnmG subunits. The cofactor is K(+).

The protein localises to the cytoplasm. Its function is as follows. Exhibits a very high intrinsic GTPase hydrolysis rate. Involved in the addition of a carboxymethylaminomethyl (cmnm) group at the wobble position (U34) of certain tRNAs, forming tRNA-cmnm(5)s(2)U34. The sequence is that of tRNA modification GTPase MnmE from Chlamydia abortus (strain DSM 27085 / S26/3) (Chlamydophila abortus).